We begin with the raw amino-acid sequence, 559 residues long: Dihydroxy-acid dehydratase (559 aa).

Residue Cys-49 participates in [2Fe-2S] cluster binding. Asp-81 is a binding site for Mg(2+). Cys-122 is a binding site for [2Fe-2S] cluster. Residues Asp-123 and Lys-124 each coordinate Mg(2+). Lys-124 carries the N6-carboxylysine modification. Cys-194 is a binding site for [2Fe-2S] cluster. Glu-446 provides a ligand contact to Mg(2+). The active-site Proton acceptor is Ser-472.

Belongs to the IlvD/Edd family. Homodimer. Requires [2Fe-2S] cluster as cofactor. Mg(2+) is required as a cofactor.

The enzyme catalyses (2R)-2,3-dihydroxy-3-methylbutanoate = 3-methyl-2-oxobutanoate + H2O. It catalyses the reaction (2R,3R)-2,3-dihydroxy-3-methylpentanoate = (S)-3-methyl-2-oxopentanoate + H2O. It functions in the pathway amino-acid biosynthesis; L-isoleucine biosynthesis; L-isoleucine from 2-oxobutanoate: step 3/4. Its pathway is amino-acid biosynthesis; L-valine biosynthesis; L-valine from pyruvate: step 3/4. Functions in the biosynthesis of branched-chain amino acids. Catalyzes the dehydration of (2R,3R)-2,3-dihydroxy-3-methylpentanoate (2,3-dihydroxy-3-methylvalerate) into 2-oxo-3-methylpentanoate (2-oxo-3-methylvalerate) and of (2R)-2,3-dihydroxy-3-methylbutanoate (2,3-dihydroxyisovalerate) into 2-oxo-3-methylbutanoate (2-oxoisovalerate), the penultimate precursor to L-isoleucine and L-valine, respectively. The chain is Dihydroxy-acid dehydratase from Prochlorococcus marinus (strain MIT 9515).